The sequence spans 575 residues: Interleukin-10 receptor subunit alpha (575 aa).

The first 16 residues, 1-16 (MLSRLLPFLVTISSLS), serve as a signal peptide directing secretion. Residues 17-241 (LEFIAYGTEL…QYFTVTNLSI (225 aa)) lie on the Extracellular side of the membrane. Residues Asn-50, Asn-66, Asn-113, and Asn-182 are each glycosylated (N-linked (GlcNAc...) asparagine). Cysteines 204 and 225 form a disulfide. Asn-238 is a glycosylation site (N-linked (GlcNAc...) asparagine). The helical transmembrane segment at 242-262 (LVISMLLFCGILVCLVLQWYI) threads the bilayer. The Cytoplasmic portion of the chain corresponds to 263 to 575 (RHPGKLPTVL…PLISSLQVEE (313 aa)). 2 positions are modified to phosphotyrosine: Tyr-443 and Tyr-493.

This sequence belongs to the type II cytokine receptor family. Interacts with IL10. Interacts with IL10RB. Interacts (via its cytoplasmic domain) with JAK1 (via N-terminus). Interacts with BTRC; this interaction leads to IL10RA ubiquitination and subsequent degradation. Interacts with STAT3. Post-translationally, phosphorylated. Phosphorylation of the cytoplasmic tail induced STAT3 activation. In terms of processing, ubiquitinated by BTRC; ubiquitination leads to endocytosis and subsequent degradation of IL10RA.

It localises to the cell membrane. Its subcellular location is the cytoplasm. Cell surface receptor for the cytokine IL10 that participates in IL10-mediated anti-inflammatory functions, limiting excessive tissue disruption caused by inflammation. Upon binding to IL10, induces a conformational change in IL10RB, allowing IL10RB to bind IL10 as well. In turn, the heterotetrameric assembly complex, composed of two subunits of IL10RA and IL10RB, activates the kinases JAK1 and TYK2 that are constitutively associated with IL10RA and IL10RB respectively. These kinases then phosphorylate specific tyrosine residues in the intracellular domain in IL10RA leading to the recruitment and subsequent phosphorylation of STAT3. Once phosphorylated, STAT3 homodimerizes, translocates to the nucleus and activates the expression of anti-inflammatory genes. In addition, IL10RA-mediated activation of STAT3 inhibits starvation-induced autophagy. The chain is Interleukin-10 receptor subunit alpha (Il10ra) from Mus musculus (Mouse).